The primary structure comprises 240 residues: Probable transcriptional regulatory protein HP_0162 (240 aa).

This sequence belongs to the TACO1 family.

The protein resides in the cytoplasm. In Helicobacter pylori (strain ATCC 700392 / 26695) (Campylobacter pylori), this protein is Probable transcriptional regulatory protein HP_0162.